Reading from the N-terminus, the 555-residue chain is CCR4-NOT transcription complex subunit 6-like (555 aa).

Residues 1–152 (MRLIGMPKEK…SLYQDPDGTR (152 aa)) are required for interaction with CNOT1, CNOT3 and CNOT7. LRR repeat units lie at residues 57–78 (HLTA…IAKL), 80–101 (NLVY…LGNM), 103–125 (SLRE…GRLF), and 126–148 (QLQT…YQDP). A nuclease domain region spans residues 158–555 (MLDNLAVHPE…VNGVHLPNRR (398 aa)). Glutamate 240 is a Mg(2+) binding site. Residues glutamate 240, glutamate 276, histidine 360, and proline 365 each contribute to the substrate site. Residue aspartate 410 participates in Mg(2+) binding. The active-site Proton donor/acceptor is aspartate 410. Substrate is bound by residues asparagine 412, asparagine 479, and phenylalanine 484.

It belongs to the CCR4/nocturin family. In terms of assembly, component of the CCR4-NOT complex; distinct complexes seem to exist that differ in the participation of probably mutually exclusive catalytic subunits; the complex contains two deadenylase subunits, CNOT6 or CNOT6L, and CNOT7 or CNOT8. Interacts with CNOT1, CNOT3, CNOT7, CNOT8 and CNOT9. Interacts with TOB1. Interacts with NANOS2. Interacts with ZFP36. Interacts with ZFP36L2. Interacts with RBM46. Requires Mg(2+) as cofactor.

It localises to the cytoplasm. Its subcellular location is the nucleus. It catalyses the reaction Exonucleolytic cleavage of poly(A) to 5'-AMP.. Poly(A) nuclease with 3'-5' RNase activity. Catalytic component of the CCR4-NOT complex which is one of the major cellular mRNA deadenylases and is linked to various cellular processes including bulk mRNA degradation, miRNA-mediated repression, translational repression during translational initiation and general transcription regulation. Additional complex functions may be a consequence of its influence on mRNA expression. Involved in mRNA decay mediated by the major-protein-coding determinant of instability (mCRD) of the FOS gene in the cytoplasm. Involved in deadenylation-dependent degradation of CDKN1B mRNA. Its mRNA deadenylase activity can be inhibited by TOB1. Mediates cell proliferation and cell survival and prevents cellular senescence. The protein is CCR4-NOT transcription complex subunit 6-like (Cnot6l) of Mus musculus (Mouse).